A 589-amino-acid polypeptide reads, in one-letter code: DNA ligase (589 aa).

Glu250 is a binding site for ATP. The N6-AMP-lysine intermediate role is filled by Lys252. ATP contacts are provided by Arg257, Arg272, Glu302, Phe342, Arg417, and Lys423.

The protein belongs to the ATP-dependent DNA ligase family. Mg(2+) serves as cofactor.

The catalysed reaction is ATP + (deoxyribonucleotide)n-3'-hydroxyl + 5'-phospho-(deoxyribonucleotide)m = (deoxyribonucleotide)n+m + AMP + diphosphate.. Its function is as follows. DNA ligase that seals nicks in double-stranded DNA during DNA replication, DNA recombination and DNA repair. In Cenarchaeum symbiosum (strain A), this protein is DNA ligase.